Here is a 351-residue protein sequence, read N- to C-terminus: uncharacterized protein (351 aa).

The segment at Met-1–Arg-61 is disordered. 2 stretches are compositionally biased toward basic and acidic residues: residues Phe-16 to Asp-38 and Arg-44 to Arg-61.

Belongs to the class IV-like SAM-binding methyltransferase superfamily. RNA methyltransferase TrmH family.

This is an uncharacterized protein from Haemophilus influenzae (strain ATCC 51907 / DSM 11121 / KW20 / Rd).